A 380-amino-acid polypeptide reads, in one-letter code: Large ribosomal subunit protein mL38 (380 aa).

A mitochondrion-targeting transit peptide spans 1–26 (MAAPWWRAAFSVTGRCRGISTSASLS). Residues 98-123 (SRTQKLQERKRFLQELRANSEEERAA) adopt a coiled-coil conformation.

Belongs to the phosphatidylethanolamine-binding protein family. Mitochondrion-specific ribosomal protein mL38 subfamily. Component of the mitochondrial ribosome large subunit (39S) which comprises a 16S rRNA and about 50 distinct proteins.

The protein resides in the mitochondrion. This chain is Large ribosomal subunit protein mL38 (Mrpl38), found in Rattus norvegicus (Rat).